Reading from the N-terminus, the 83-residue chain is Small ribosomal subunit protein bS16 (83 aa).

Belongs to the bacterial ribosomal protein bS16 family.

This is Small ribosomal subunit protein bS16 from Pseudomonas fluorescens (strain SBW25).